A 72-amino-acid polypeptide reads, in one-letter code: Translation initiation factor IF-1 (72 aa).

Positions 1-72 (MAKTDLLEVQ…ERGRIVFRHK (72 aa)) constitute an S1-like domain.

Belongs to the IF-1 family. In terms of assembly, component of the 30S ribosomal translation pre-initiation complex which assembles on the 30S ribosome in the order IF-2 and IF-3, IF-1 and N-formylmethionyl-tRNA(fMet); mRNA recruitment can occur at any time during PIC assembly.

Its subcellular location is the cytoplasm. Its function is as follows. One of the essential components for the initiation of protein synthesis. Stabilizes the binding of IF-2 and IF-3 on the 30S subunit to which N-formylmethionyl-tRNA(fMet) subsequently binds. Helps modulate mRNA selection, yielding the 30S pre-initiation complex (PIC). Upon addition of the 50S ribosomal subunit IF-1, IF-2 and IF-3 are released leaving the mature 70S translation initiation complex. In Spiroplasma kunkelii, this protein is Translation initiation factor IF-1.